Here is a 241-residue protein sequence, read N- to C-terminus: Bidirectional sugar transporter SWEET17 (241 aa).

Topologically, residues 1 to 3 (MAE) are vacuolar. A helical transmembrane segment spans residues 4-24 (ASFYIGVIGNVISVLVFLSPV). A MtN3/slv 1 domain is found at 6–92 (FYIGVIGNVI…SLFLFYAPRH (87 aa)). Residues 25 to 41 (ETFWKIVKRRSTEEYKS) lie on the Cytoplasmic side of the membrane. The chain crosses the membrane as a helical span at residues 42 to 62 (LPYICTLLGSSLWTYYGIVTP). At 63-69 (GEYLVST) the chain is on the vacuolar side. Residues 70–90 (VNGFGALVETIYVSLFLFYAP) traverse the membrane as a helical segment. Residues 91 to 94 (RHLK) are Cytoplasmic-facing. The chain crosses the membrane as a helical span at residues 95–115 (LKTVDVDAMLNVFFPIAAIVA). Over 116-128 (TRSAFEDEKMRSQ) the chain is Vacuolar. A helical membrane pass occupies residues 129-149 (SIGFISAGLNIIMYGSPLSAM). A MtN3/slv 2 domain is found at 129-212 (SIGFISAGLN…LILYGIYRNA (84 aa)). The Cytoplasmic segment spans residues 150–161 (KTVVTTKSVKYM). A helical membrane pass occupies residues 162–182 (PFWLSFFLFLNGAIWAVYALL). Residues 183–185 (QHD) lie on the Vacuolar side of the membrane. Residues 186–206 (VFLLVPNGVGFVFGTMQLILY) form a helical membrane-spanning segment. The Cytoplasmic segment spans residues 207–241 (GIYRNAKPVGLSNGLSEIAQDEEEGLTSRVEPLLS).

Belongs to the SWEET sugar transporter family. In terms of assembly, forms homooligomers and heterooligomers with SWEET1, SWEET2, SWEET3, SWEET4, SWEET6, SWEET7, SWEET8, SWEET9, SWEET11, SWEET12, SWEET13, SWEET15 and SWEET16. In terms of tissue distribution, expressed in leaves at low levels, mostly in xylem and parenchyma. Highly expressed in the cortex of roots, predominantly in tips and mature regions, especially in tonoplasts. Also accumulates in cotyledons, stems, flowers, and siliques.

It localises to the vacuole membrane. Acts as a vacuolar hexose transporter. Regulates fructose (Fru) homeostasis in leaves and roots by exporting/importing Fru through the tonoplast regarding metabolic demand. The protein is Bidirectional sugar transporter SWEET17 of Arabidopsis thaliana (Mouse-ear cress).